Reading from the N-terminus, the 211-residue chain is Thiamine-phosphate synthase (211 aa).

4-amino-2-methyl-5-(diphosphooxymethyl)pyrimidine-binding positions include 37–41 and N69; that span reads QLRIK. Mg(2+) contacts are provided by D70 and D89. A 4-amino-2-methyl-5-(diphosphooxymethyl)pyrimidine-binding site is contributed by S108. 2-[(2R,5Z)-2-carboxy-4-methylthiazol-5(2H)-ylidene]ethyl phosphate is bound at residue 134 to 136; it reads TQT. Residue K137 coordinates 4-amino-2-methyl-5-(diphosphooxymethyl)pyrimidine. 2-[(2R,5Z)-2-carboxy-4-methylthiazol-5(2H)-ylidene]ethyl phosphate is bound by residues G166 and 186-187; that span reads VS.

Belongs to the thiamine-phosphate synthase family. Mg(2+) serves as cofactor.

The catalysed reaction is 2-[(2R,5Z)-2-carboxy-4-methylthiazol-5(2H)-ylidene]ethyl phosphate + 4-amino-2-methyl-5-(diphosphooxymethyl)pyrimidine + 2 H(+) = thiamine phosphate + CO2 + diphosphate. The enzyme catalyses 2-(2-carboxy-4-methylthiazol-5-yl)ethyl phosphate + 4-amino-2-methyl-5-(diphosphooxymethyl)pyrimidine + 2 H(+) = thiamine phosphate + CO2 + diphosphate. It catalyses the reaction 4-methyl-5-(2-phosphooxyethyl)-thiazole + 4-amino-2-methyl-5-(diphosphooxymethyl)pyrimidine + H(+) = thiamine phosphate + diphosphate. It participates in cofactor biosynthesis; thiamine diphosphate biosynthesis; thiamine phosphate from 4-amino-2-methyl-5-diphosphomethylpyrimidine and 4-methyl-5-(2-phosphoethyl)-thiazole: step 1/1. In terms of biological role, condenses 4-methyl-5-(beta-hydroxyethyl)thiazole monophosphate (THZ-P) and 2-methyl-4-amino-5-hydroxymethyl pyrimidine pyrophosphate (HMP-PP) to form thiamine monophosphate (TMP). This is Thiamine-phosphate synthase from Salmonella dublin (strain CT_02021853).